A 241-amino-acid polypeptide reads, in one-letter code: Chloride intracellular channel protein 1 (241 aa).

A2 carries the post-translational modification N-acetylalanine. The required for insertion into the membrane stretch occupies residues 2–90; it reads AEEQPQVELF…EEFLEAVLCP (89 aa). Position 13 is an N6-acetyllysine (K13). C24 is a glutathione binding site. At C24 the chain carries S-glutathionyl cysteine; alternate. The G-site signature appears at 24–27; that stretch reads CPFS. A disulfide bridge links C24 with C59. Residues 26–46 traverse the membrane as a helical segment; sequence FSQRLFMVLWLKGVTFNVTTV. Glutathione-binding residues include L64 and T77. The 141-residue stretch at 93–233 folds into the GST C-terminal domain; sequence YPKLAALNPE…PDDEEIELAY (141 aa). K119 is subject to N6-acetyllysine. The residue at position 121 (S121) is a Phosphoserine. Position 131 is an N6-acetyllysine (K131). Residues S156 and S211 each carry the phosphoserine modification. Y233 carries the phosphotyrosine modification.

The protein belongs to the chloride channel CLIC family. Monomer. Homodimer (in vitro). Interacts with TRAPPC2. Dimerization requires a conformation change that leads to the exposure of a large hydrophobic surface. In vivo, this may lead to membrane insertion. Interacts with AKAP9. In terms of processing, hydrogen peroxide treatment causes a conformation change, leading to dimerization and formation of an intramolecular disulfide bond between Cys-24 and Cys-59. Expression is prominent in heart, placenta, liver, kidney and pancreas.

It is found in the nucleus. The protein localises to the nucleus membrane. The protein resides in the cytoplasm. Its subcellular location is the cell membrane. It localises to the endoplasmic reticulum. It catalyses the reaction L-dehydroascorbate + 2 glutathione = glutathione disulfide + L-ascorbate. It carries out the reaction chloride(in) = chloride(out). The enzyme catalyses iodide(out) = iodide(in). The catalysed reaction is thiocyanate(in) = thiocyanate(out). It catalyses the reaction nitrate(in) = nitrate(out). It carries out the reaction bromide(in) = bromide(out). The enzyme catalyses fluoride(in) = fluoride(out). The oxidoreductase activity is inhibited by rapamycin, amphotericin B and IAA-94. The channel conductance is regulated by pH and redox membrane potential. Inhibited by IAA-94. In the soluble state, catalyzes glutaredoxin-like thiol disulfide exchange reactions with reduced glutathione as electron donor. Reduces selenite and dehydroascorbate and may act as an antioxidant during oxidative stress response. Can insert into membranes and form voltage-dependent multi-ion conductive channels. Membrane insertion seems to be redox-regulated and may occur only under oxidizing conditions. Involved in regulation of the cell cycle. The sequence is that of Chloride intracellular channel protein 1 from Homo sapiens (Human).